The chain runs to 428 residues: 3-phosphoshikimate 1-carboxyvinyltransferase (428 aa).

Residues K22, S23, and R27 each contribute to the 3-phosphoshikimate site. K22 contributes to the phosphoenolpyruvate binding site. Positions 96 and 124 each coordinate phosphoenolpyruvate. 3-phosphoshikimate contacts are provided by S171, S172, Q173, S198, D311, and K338. Q173 contacts phosphoenolpyruvate. D311 (proton acceptor) is an active-site residue. Positions 342 and 383 each coordinate phosphoenolpyruvate.

This sequence belongs to the EPSP synthase family. In terms of assembly, monomer.

Its subcellular location is the cytoplasm. It carries out the reaction 3-phosphoshikimate + phosphoenolpyruvate = 5-O-(1-carboxyvinyl)-3-phosphoshikimate + phosphate. The protein operates within metabolic intermediate biosynthesis; chorismate biosynthesis. Catalyzes the transfer of the enolpyruvyl moiety of phosphoenolpyruvate (PEP) to the 5-hydroxyl of shikimate-3-phosphate (S3P) to produce enolpyruvyl shikimate-3-phosphate and inorganic phosphate. The chain is 3-phosphoshikimate 1-carboxyvinyltransferase from Methanopyrus kandleri (strain AV19 / DSM 6324 / JCM 9639 / NBRC 100938).